Here is a 1095-residue protein sequence, read N- to C-terminus: MSVNIPSNSVPSGASRFQVHVINEGHGSGAAMSDSTDPPHYEETSFGDEAQNRLKISFRPGNQECYENFLQTGETAKTDTTFHAYDSHTNTYYLQTFGHNTMDAVPKIEYYRNTGSVSGPKVNRPSLQEIHEQLAKNVAVAPGSADRVANGDGMPGDEQAENKEEDVTGVVKFGWVKGVLVRCMLNIWGVMLFIRLSWIVGEAGIGLGVIIIGLSVVVTTLTGISMSAICTNGVVRGGGAYYLISRSLGPEFGGSIGLIFRFANAVRVAMYVVGFAETVVDLLKESDSMMVDPTNDIRIIGSITVVILLGISVAGMEWEAKAQVILLVILLIGIANFFIGTVIPSNNEKKSRGFFNYQASIFAENFGPSFTEGEGFFSVFAIFFPAATGILAGANISGDLEDPQDAIPRGTMLAIFITTVAYIGVAICVRACVVRDATGSMNDTVVSGMNCNGSAACGLGYDFSRCQHEPCQYGLMNNFQVMSMVSGFGPLITAGIFSATLSSALASLVSAPKVFQALCKDNIFKGLQFFAKGYGKNNEPLRGYFLTFVIAMAFILIAELNVIAPIISNFFLASYALINFSCFHASYAKSPGWRPAYGIYNMWVSLFGAILCCAVMFVINWWAAVITYVIELFLYIYVTYKKPDVNWGSSTQALSYVSALDNALELTTVEDHVKNFRPQCIVLTGGPMTRPALLDITHAFTKNSGLCICCEVFVGPRKLCVKEMNSGMAKKQAWLMKNKIKAFYAAVAADCFRDGVRSLLQASGLGRMKPNTLVIGYKKNWRKAPLSELENYVGIIHDAFDFEIGVVIVRISQGFDISPVLQVQDELEKLEQERLALEAAIKDNDCEEGKGGIRGLFKKAGKLNITKPAPKKDSNISTIQSMHVGEFNQKLVEASAQFKKKQGKGTIDVWWLFDDGGLTLLIPYILTLRKKWKDCKLRIYVGGKINRIEEEKISMASLLSKFRIKFADIHIIGDINIKPNKESWKVFEEMIEPYRLHESHKDLTTAEKLKRESPWKITDAELEAVKEKSYRQVRLNELLQEHSRAANLIVLSLPVARKGSISDLLYMAWLEILTKNLPPVLLVRGNHKNVLTFYS.

The Cytoplasmic portion of the chain corresponds to 1–173; it reads MSVNIPSNSV…EEDVTGVVKF (173 aa). An RFXV motif motif is present at residues 16–19; the sequence is RFQV. Positions 26 to 45 are disordered; that stretch reads HGSGAAMSDSTDPPHYEETS. Phosphoserine occurs at positions 57 and 87. Residues Thr91, Thr96, Thr101, and Thr114 each carry the phosphothreonine modification. Phosphoserine is present on Ser116. Position 126 is a phosphoserine; by AMPK (Ser126). Ser144 carries the phosphoserine modification. A helical membrane pass occupies residues 174–194; that stretch reads GWVKGVLVRCMLNIWGVMLFI. The Extracellular segment spans residues 195–197; the sequence is RLS. A helical transmembrane segment spans residues 198–218; sequence WIVGEAGIGLGVIIIGLSVVV. The Cytoplasmic portion of the chain corresponds to 219–255; the sequence is TTLTGISMSAICTNGVVRGGGAYYLISRSLGPEFGGS. Residues 256–276 form a helical membrane-spanning segment; sequence IGLIFRFANAVRVAMYVVGFA. Residues 277-298 are Extracellular-facing; sequence ETVVDLLKESDSMMVDPTNDIR. Residues 299 to 319 form a helical membrane-spanning segment; it reads IIGSITVVILLGISVAGMEWE. The Cytoplasmic portion of the chain corresponds to 320 to 323; it reads AKAQ. A helical membrane pass occupies residues 324 to 344; the sequence is VILLVILLIGIANFFIGTVIP. The Extracellular portion of the chain corresponds to 345–375; the sequence is SNNEKKSRGFFNYQASIFAENFGPSFTEGEG. Residues 376-396 form a helical membrane-spanning segment; the sequence is FFSVFAIFFPAATGILAGANI. The Cytoplasmic portion of the chain corresponds to 397–413; that stretch reads SGDLEDPQDAIPRGTML. A helical transmembrane segment spans residues 414 to 434; sequence AIFITTVAYIGVAICVRACVV. The Extracellular portion of the chain corresponds to 435–546; sequence RDATGSMNDT…NNEPLRGYFL (112 aa). 2 N-linked (GlcNAc...) asparagine glycosylation sites follow: Asn442 and Asn452. 2 helical membrane-spanning segments follow: residues 547–567 and 568–588; these read TFVIAMAFILIAELNVIAPII and SNFFLASYALINFSCFHASYA. Residues 589–605 are Extracellular-facing; it reads KSPGWRPAYGIYNMWVS. A helical membrane pass occupies residues 606–626; the sequence is LFGAILCCAVMFVINWWAAVI. Residues 627 to 1095 lie on the Cytoplasmic side of the membrane; it reads TYVIELFLYI…NHKNVLTFYS (469 aa).

This sequence belongs to the SLC12A transporter family. In terms of assembly, when phosphorylated, interacts with PPP3CB. Post-translationally, phosphorylated at Ser-87, Thr-96 and Thr-101 by OXSR1/OSR1 and STK39/SPAK downstream of WNK kinases (WNK1, WNK2, WNK3 or WNK4), promoting its activity. In terms of tissue distribution, expressed predominantly in kidney (at protein level).

The protein resides in the apical cell membrane. The enzyme catalyses K(+)(out) + 2 chloride(out) + Na(+)(out) = K(+)(in) + 2 chloride(in) + Na(+)(in). Its activity is regulated as follows. Activated following phosphorylation by OXSR1/OSR1 and STK39/SPAK downstream of WNK kinases (WNK1, WNK2, WNK3 or WNK4). In terms of biological role, renal sodium, potassium and chloride ion cotransporter that mediates the transepithelial NaCl reabsorption in the thick ascending limb and plays an essential role in the urinary concentration and volume regulation. Electrically silent transporter system. This is Solute carrier family 12 member 1 (Slc12a1) from Rattus norvegicus (Rat).